Here is a 780-residue protein sequence, read N- to C-terminus: ATP-dependent 6-phosphofructokinase, muscle type (780 aa).

Position 2 is an N-acetylthreonine (T2). The tract at residues 2-390 (THEEHHAAKT…NWEVYKLLAH (389 aa)) is N-terminal catalytic PFK domain 1. Residues G25, 88–89 (RC), and 118–121 (GDGS) contribute to the ATP site. D119 contacts Mg(2+). At S133 the chain carries Phosphoserine. Substrate is bound by residues 164 to 166 (SID), R201, 208 to 210 (MGR), E264, R292, and 298 to 301 (HVQR). D166 acts as the Proton acceptor in catalysis. A Phosphoserine modification is found at S377. Positions 391–401 (VRPPVSKSGSH) are interdomain linker. A C-terminal regulatory PFK domain 2 region spans residues 402–780 (TVAVMNVGAP…TRKRSGEAAV (379 aa)). Residues R471 and 528–532 (TVSNN) contribute to the beta-D-fructose 2,6-bisphosphate site. O-linked (GlcNAc) serine glycosylation occurs at S530. An N6-(2-hydroxyisobutyryl)lysine modification is found at K557. Beta-D-fructose 2,6-bisphosphate contacts are provided by residues R566, 573–575 (MGG), E629, R655, and 661–664 (HMQQ). S667 is modified (phosphoserine). Beta-D-fructose 2,6-bisphosphate is bound at residue R735. The residue at position 775 (S775) is a Phosphoserine.

It belongs to the phosphofructokinase type A (PFKA) family. ATP-dependent PFK group I subfamily. Eukaryotic two domain clade 'E' sub-subfamily. In terms of assembly, homo- and heterotetramers. Phosphofructokinase (PFK) enzyme functions as a tetramer composed of different combinations of 3 types of subunits, called PFKM (where M stands for Muscle), PFKL (Liver) and PFKP (Platelet). The composition of the PFK tetramer differs according to the tissue type it is present in. In muscles, it is composed of 4 PFKM subunits (also called M4). In the liver, the predominant form is a tetramer of PFKL subunits (L4). In erythrocytes, both PFKM and PFKL subunits randomly tetramerize to form M4, L4 and other combinations (ML3, M2L2, M3L). The kinetic and regulatory properties of the tetrameric enzyme are dependent on the subunit composition, hence can vary across tissues. Interacts (via C-terminus) with HK1 (via N-terminal spermatogenic cell-specific region). It depends on Mg(2+) as a cofactor. In terms of processing, glcNAcylation decreases enzyme activity.

The protein resides in the cytoplasm. It carries out the reaction beta-D-fructose 6-phosphate + ATP = beta-D-fructose 1,6-bisphosphate + ADP + H(+). Its pathway is carbohydrate degradation; glycolysis; D-glyceraldehyde 3-phosphate and glycerone phosphate from D-glucose: step 3/4. Allosterically activated by ADP, AMP, or fructose 2,6-bisphosphate, and allosterically inhibited by ATP or citrate. Its function is as follows. Catalyzes the phosphorylation of D-fructose 6-phosphate to fructose 1,6-bisphosphate by ATP, the first committing step of glycolysis. This chain is ATP-dependent 6-phosphofructokinase, muscle type (PFKM), found in Homo sapiens (Human).